The primary structure comprises 93 residues: DNA-directed RNA polymerase subunit omega (93 aa).

It belongs to the RNA polymerase subunit omega family. In terms of assembly, the RNAP catalytic core consists of 2 alpha, 1 beta, 1 beta' and 1 omega subunit. When a sigma factor is associated with the core the holoenzyme is formed, which can initiate transcription.

It catalyses the reaction RNA(n) + a ribonucleoside 5'-triphosphate = RNA(n+1) + diphosphate. In terms of biological role, promotes RNA polymerase assembly. Latches the N- and C-terminal regions of the beta' subunit thereby facilitating its interaction with the beta and alpha subunits. The sequence is that of DNA-directed RNA polymerase subunit omega from Acinetobacter baylyi (strain ATCC 33305 / BD413 / ADP1).